Reading from the N-terminus, the 262-residue chain is Acyl-[acyl-carrier-protein]--UDP-N-acetylglucosamine O-acyltransferase (262 aa).

It belongs to the transferase hexapeptide repeat family. LpxA subfamily. As to quaternary structure, homotrimer.

The protein resides in the cytoplasm. It catalyses the reaction a (3R)-hydroxyacyl-[ACP] + UDP-N-acetyl-alpha-D-glucosamine = a UDP-3-O-[(3R)-3-hydroxyacyl]-N-acetyl-alpha-D-glucosamine + holo-[ACP]. The protein operates within glycolipid biosynthesis; lipid IV(A) biosynthesis; lipid IV(A) from (3R)-3-hydroxytetradecanoyl-[acyl-carrier-protein] and UDP-N-acetyl-alpha-D-glucosamine: step 1/6. Involved in the biosynthesis of lipid A, a phosphorylated glycolipid that anchors the lipopolysaccharide to the outer membrane of the cell. In Burkholderia thailandensis (strain ATCC 700388 / DSM 13276 / CCUG 48851 / CIP 106301 / E264), this protein is Acyl-[acyl-carrier-protein]--UDP-N-acetylglucosamine O-acyltransferase.